The primary structure comprises 103 residues: MAKKSLIQREKKRQKLEQKYHLIRQSLKKKIRSKVSPLSLSEKTKMREKLQSLPRNSAPTRLHRRCFLTGRPRANYRDFGLSGHVLREMVYECLLPGATRSSW.

A disordered region spans residues 34–56 (KVSPLSLSEKTKMREKLQSLPRN).

Belongs to the universal ribosomal protein uS14 family. Part of the 30S ribosomal subunit.

It is found in the plastid. Its subcellular location is the chloroplast. In terms of biological role, binds 16S rRNA, required for the assembly of 30S particles. This chain is Small ribosomal subunit protein uS14c, found in Brachypodium distachyon (Purple false brome).